Consider the following 396-residue polypeptide: Tryptophan synthase beta chain (396 aa).

At lysine 86 the chain carries N6-(pyridoxal phosphate)lysine.

It belongs to the TrpB family. As to quaternary structure, tetramer of two alpha and two beta chains. Pyridoxal 5'-phosphate serves as cofactor.

The enzyme catalyses (1S,2R)-1-C-(indol-3-yl)glycerol 3-phosphate + L-serine = D-glyceraldehyde 3-phosphate + L-tryptophan + H2O. It participates in amino-acid biosynthesis; L-tryptophan biosynthesis; L-tryptophan from chorismate: step 5/5. The beta subunit is responsible for the synthesis of L-tryptophan from indole and L-serine. In Pectobacterium carotovorum subsp. carotovorum (strain PC1), this protein is Tryptophan synthase beta chain.